We begin with the raw amino-acid sequence, 176 residues long: MGANGTLVECKRGESDAVVFRFLIFDAPSPSSVTAYVKLMQKYNVRHIVRACGQTYSAEAFEKQGMVVHGWSFDDGAPPTQTVIDNWLNLLEQEKNKSPPETIAVHCVAGLGRAPILVALALVEYGGMPPLDAVGYVRGRRKGAINQVQLNWLMRYKPRHQEGNEGSLSCAGCAVM.

The 153-residue stretch at 13-165 (GESDAVVFRF…YKPRHQEGNE (153 aa)) folds into the Tyrosine-protein phosphatase domain. A disulfide bond links cysteine 52 and cysteine 107. Aspartate 75 (proton donor) is an active-site residue. The active-site Phosphocysteine intermediate is the cysteine 107. A substrate-binding site is contributed by 109-113 (AGLGR). Cysteine 173 bears the Cysteine methyl ester mark. Residue cysteine 173 is the site of S-farnesyl cysteine attachment. The propeptide at 174-176 (AVM) is removed in mature form.

The protein belongs to the protein-tyrosine phosphatase family.

The protein localises to the flagellar pocket. It catalyses the reaction O-phospho-L-tyrosyl-[protein] + H2O = L-tyrosyl-[protein] + phosphate. Activated in a reduced environment which promotes the reduction of the disulfide bond between the regulatory Cys-52 and the catalytic Cys-107 residues. Inhibited by sodium orthovanadate. Has protein tyrosine phosphatase activity. The polypeptide is Protein tyrosine phosphatase PRL-1 (Trypanosoma cruzi (strain CL Brener)).